Consider the following 501-residue polypeptide: Phosphatidylinositol 4-kinase type 2-beta (501 aa).

Disordered stretches follow at residues 1–30 and 65–122; these read MMAE…SSEV and TELE…NHFP. Residues 17–27 show a composition bias toward polar residues; that stretch reads GDSTPETNFLS. A compositionally biased stretch (low complexity) spans 76–88; that stretch reads ALLLPGPAGSLSP. Polar residues predominate over residues 99-117; it reads NMLSSSSDNLASPGNSSGE. Residues 141 to 471 enclose the PI3K/PI4K catalytic domain; sequence GVFPERISQG…VQMPRVVVER (331 aa). Residues 147 to 153 are G-loop; it reads ISQGSSG. 2 residues coordinate ATP: Ser154 and Lys169. The tract at residues 174 to 176 is important for substrate binding; the sequence is EPY. Positions 182 to 195 are important for interaction with membranes; the sequence is KWTKYFHKVCCPCC. Residues 278 to 281 and 292 to 293 each bind ATP; these read QLFV and RK. Residues 285 to 293 form an important for interaction with membranes region; that stretch reads HEADFWLRK. Residues 322–330 form a catalytic loop region; that stretch reads RNTDRGNDN. The segment at 362-382 is activation loop; the sequence is AIDNGLAFPFKHPDEWRAYPF. Asp364 contributes to the ATP binding site. Residues 377–386 form an important for interaction with membranes region; that stretch reads WRAYPFHWAW.

Belongs to the PI3/PI4-kinase family. Type II PI4K subfamily.

It is found in the cytoplasm. The protein resides in the cytosol. The protein localises to the golgi apparatus membrane. Its subcellular location is the endoplasmic reticulum membrane. It localises to the cell membrane. It is found in the early endosome membrane. The catalysed reaction is a 1,2-diacyl-sn-glycero-3-phospho-(1D-myo-inositol) + ATP = a 1,2-diacyl-sn-glycero-3-phospho-(1D-myo-inositol 4-phosphate) + ADP + H(+). Functionally, contributes to the overall PI4-kinase activity of the cell. This contribution may be especially significant in plasma membrane, endosomal and Golgi compartments. The phosphorylation of phosphatidylinositol (PI) to PI4P is the first committed step in the generation of phosphatidylinositol 4,5-bisphosphate (PIP2), a precursor of the second messenger inositol 1,4,5-trisphosphate (InsP3). In Danio rerio (Zebrafish), this protein is Phosphatidylinositol 4-kinase type 2-beta (pi4k2b).